Here is a 390-residue protein sequence, read N- to C-terminus: Formate-dependent phosphoribosylglycinamide formyltransferase (390 aa).

N(1)-(5-phospho-beta-D-ribosyl)glycinamide-binding positions include 14 to 15 and Glu-74; that span reads EL. ATP contacts are provided by residues Arg-106, Lys-147, 152–157, 187–190, and Glu-195; these read SSGKGQ and EQFI. The ATP-grasp domain maps to 111–304; the sequence is DLAAQELGIT…EFDLHARAIM (194 aa). The Mg(2+) site is built by Glu-263 and Glu-275. N(1)-(5-phospho-beta-D-ribosyl)glycinamide is bound by residues Asp-282, Lys-351, and 358–359; that span reads RR.

Belongs to the PurK/PurT family. In terms of assembly, homodimer.

It catalyses the reaction N(1)-(5-phospho-beta-D-ribosyl)glycinamide + formate + ATP = N(2)-formyl-N(1)-(5-phospho-beta-D-ribosyl)glycinamide + ADP + phosphate + H(+). Its pathway is purine metabolism; IMP biosynthesis via de novo pathway; N(2)-formyl-N(1)-(5-phospho-D-ribosyl)glycinamide from N(1)-(5-phospho-D-ribosyl)glycinamide (formate route): step 1/1. Its function is as follows. Involved in the de novo purine biosynthesis. Catalyzes the transfer of formate to 5-phospho-ribosyl-glycinamide (GAR), producing 5-phospho-ribosyl-N-formylglycinamide (FGAR). Formate is provided by PurU via hydrolysis of 10-formyl-tetrahydrofolate. The chain is Formate-dependent phosphoribosylglycinamide formyltransferase from Erythrobacter litoralis (strain HTCC2594).